A 61-amino-acid polypeptide reads, in one-letter code: Small ribosomal subunit protein eS30A (61 aa).

Residues 1-36 (MGKVHGSLARAGKVKSQTPKVEKQEKPKQPKGRAYK) are disordered.

Belongs to the eukaryotic ribosomal protein eS30 family. Component of the small ribosomal subunit (SSU). Mature yeast ribosomes consist of a small (40S) and a large (60S) subunit. The 40S small subunit contains 1 molecule of ribosomal RNA (18S rRNA) and at least 33 different proteins. The large 60S subunit contains 3 rRNA molecules (25S, 5.8S and 5S rRNA) and at least 46 different proteins.

Its subcellular location is the cytoplasm. The protein localises to the nucleus. Functionally, component of the ribosome, a large ribonucleoprotein complex responsible for the synthesis of proteins in the cell. The small ribosomal subunit (SSU) binds messenger RNAs (mRNAs) and translates the encoded message by selecting cognate aminoacyl-transfer RNA (tRNA) molecules. The large subunit (LSU) contains the ribosomal catalytic site termed the peptidyl transferase center (PTC), which catalyzes the formation of peptide bonds, thereby polymerizing the amino acids delivered by tRNAs into a polypeptide chain. The nascent polypeptides leave the ribosome through a tunnel in the LSU and interact with protein factors that function in enzymatic processing, targeting, and the membrane insertion of nascent chains at the exit of the ribosomal tunnel. This chain is Small ribosomal subunit protein eS30A (rps3001), found in Schizosaccharomyces pombe (strain 972 / ATCC 24843) (Fission yeast).